Reading from the N-terminus, the 515-residue chain is MTKRALISVSDKAGIVEFAQELKKLGWEIISTGGTKVALDSAGVETIAIDDVTGFPEMMDGRVKTLHPNIHGGLLARRDLDSHLEAAKDNNIELIDLVVVNLYPFKETILKPDVTYADAVENIDIGGPSMLRSAAKNHASVTVVVDPADYAVVLDELSANGETTYETRQRLAAKVFRHTAAYDALIAEYFTAQVGESKPEKLTLTYDLKQAMRYGENPQQDADFYQKALPTDYSIASAKQLNGKELSFNNIRDADAAIRIIRDFKYRPTVVALKHMNPCGIGQADDIKTAWDYAYESDPVSIFGGIVVLNREVDAATAEKMHGVFLEIIIAPSYTDEALAILTNKKKNLRILALPFDAQEASEVEAEYTGVVGGLLVQNQDVVKESPADWQVVTKRQPTETEATALEFAWKAIKYVKSNGIIVTNDHMTLGVGPGQTNRVASVRIAIDQAKDRLDGAVLASDAFFPFADNVEEIAKAGIKAIIQPGGSVRDQESIEAADKYGLTMVFTGVRHFRH.

Residues 1–145 (MTKRALISVS…KNHASVTVVV (145 aa)) form the MGS-like domain.

It belongs to the PurH family.

It catalyses the reaction (6R)-10-formyltetrahydrofolate + 5-amino-1-(5-phospho-beta-D-ribosyl)imidazole-4-carboxamide = 5-formamido-1-(5-phospho-D-ribosyl)imidazole-4-carboxamide + (6S)-5,6,7,8-tetrahydrofolate. The catalysed reaction is IMP + H2O = 5-formamido-1-(5-phospho-D-ribosyl)imidazole-4-carboxamide. It participates in purine metabolism; IMP biosynthesis via de novo pathway; 5-formamido-1-(5-phospho-D-ribosyl)imidazole-4-carboxamide from 5-amino-1-(5-phospho-D-ribosyl)imidazole-4-carboxamide (10-formyl THF route): step 1/1. It functions in the pathway purine metabolism; IMP biosynthesis via de novo pathway; IMP from 5-formamido-1-(5-phospho-D-ribosyl)imidazole-4-carboxamide: step 1/1. This Streptococcus gordonii (strain Challis / ATCC 35105 / BCRC 15272 / CH1 / DL1 / V288) protein is Bifunctional purine biosynthesis protein PurH.